Here is a 1710-residue protein sequence, read N- to C-terminus: Phosphatidylinositol 4-phosphate 5-kinase (1710 aa).

Residues 68-98 (YKSIFKAFDLNNDNYLDFYEFCVAINIMLKG) enclose the EF-hand domain. 5 residues coordinate Ca(2+): aspartate 76, asparagine 78, aspartate 80, tyrosine 82, and glutamate 87. 3 disordered regions span residues 139–255 (NNMN…DPIN), 427–479 (KQKK…IKSV), and 895–993 (GEGH…HNNN). Low complexity predominate over residues 140–235 (NMNGDNINGD…HNNNSHNNNN (96 aa)). Residues 236 to 248 (KAENSLGQPLNEK) are compositionally biased toward polar residues. Positions 427–444 (KQKKKKKKKKKKKKKKEK) are enriched in basic residues. Residues 456–468 (SSSMENKSQNKSQ) show a composition bias toward low complexity. The segment covering 902 to 973 (EEEEKNDDEE…DDNDDNDDND (72 aa)) has biased composition (acidic residues). Basic and acidic residues predominate over residues 974–987 (EKSNIKIENKKDVP). The PIPK domain occupies 1334 to 1709 (QKKTFHRILA…RFVTFIENHM (376 aa)).

The catalysed reaction is a 1,2-diacyl-sn-glycero-3-phospho-(1D-myo-inositol 4-phosphate) + ATP = a 1,2-diacyl-sn-glycero-3-phospho-(1D-myo-inositol-4,5-bisphosphate) + ADP + H(+). Catalytic activity is increase by myristoylated ARF1. Phosphatidic acid has no effect on catalytic activity. Functionally, catalyzes the phosphorylation of phosphatidylinositol 4-phosphate (PtdIns(4)P/PI4P) to form phosphatidylinositol 4,5-bisphosphate (PtdIns(4,5)P2/PIP2), a lipid second messenger that regulates several cellular processes. This is Phosphatidylinositol 4-phosphate 5-kinase from Plasmodium falciparum (isolate 3D7).